The following is a 401-amino-acid chain: Enoyl-[acyl-carrier-protein] reductase [NADH] (401 aa).

NAD(+) is bound by residues G48 to Y53, F74 to E75, D111 to A112, and L139 to A140. Y225 contributes to the substrate binding site. Y235 (proton donor) is an active-site residue. NAD(+)-binding positions include K244 and V273–T275.

Belongs to the TER reductase family. As to quaternary structure, monomer.

The enzyme catalyses a 2,3-saturated acyl-[ACP] + NAD(+) = a (2E)-enoyl-[ACP] + NADH + H(+). The protein operates within lipid metabolism; fatty acid biosynthesis. Functionally, involved in the final reduction of the elongation cycle of fatty acid synthesis (FAS II). Catalyzes the reduction of a carbon-carbon double bond in an enoyl moiety that is covalently linked to an acyl carrier protein (ACP). This is Enoyl-[acyl-carrier-protein] reductase [NADH] from Shewanella putrefaciens (strain CN-32 / ATCC BAA-453).